Here is a 1268-residue protein sequence, read N- to C-terminus: MSGTFSRCMCTPAARVFWNAGQVFCTRCLSARPLLSPELQDTDLGVVGLFYKPKDKIHWKVPIGIPQVECTPSGCCWLSAVFPLARMTSGNHNFLQRLVKVADVLYRDGCLAPRHLRELQVYERGCSWYPITGPVPGMGLFANSMHVSDQPFPGATHVLTNSPLPQRACRQPFCPFEEAHSDVYRWKKFVIFTDSSPNGRFRMMWTPESDDSAALEVLPPELERQVEILTRSFPAHHPINLADWELTESPENGFSFGTSHSCGHIVQNPNVFDGKCWLTCFLGQSAEVCYHEEHLANALGYQTKWGVHGKYLQRRLQVRGMRAVVDPDGPIHVEALSCSQSWVRHLTLNNDVTPGFVRLTSIRIVSNTEPTAFRIFRFGAHKWYGAAGKRARAKRATKSGKDSALAPKIAPPVPTCGITTYSPPTDGSCGWHVLAAIVNRMINGDFTSPLPQYNRPEDDWASDYDLAQAIQCLQLPATVVRNRACPNAKYLIKLNGVHWEVEVRSGMAPRSLSRECVVGVCSEGCVAPPYPADGLPKRALEALASAYRLPSDCVSSGIADFLADPPPQEFWTLDKMLTSPSPERSGFSSLYKLLLEVVPQKCGATEGAFVYAVERMLKDCPSPEQAMALLAKIKVPSSKAPSVSLDECFPAGVPADFEPAFQERPRSPGAAVALCSPDAKGFEGTASEEAQESGHKAVHAVPLAEGPNNEQVQVVAGEQLELGGCGLAIGSAQSSSDSKRENMHNSREDEPLDLSHPAPAATTTLVGEQTPDNPGSDASALPIAVRGFVPTGPILRHVEHCGTESGDSSSPLDLSFAQTLDQPLDLSLAAWPVKATASDPGWVRGRCEPVFLKPRKAFSDGDSALQFGELSESSSVIEFDQTKDTLVADAPVDLTTSNEALSAVDPSEFVELRRPRHSAQALIDRGGPLADVHAKIKNRVYEQCLQACEPGSRATPATREWLDKMWDRVDMKTWRCTSQFQAGRILASLKFLPDMIQDTPPPVPRKNRASDNAGLKQLVARWDKKLSVTPPPKSAGLVLDQTVPPPTDIQQEDATPSDGLSHASDFSSRVSTSWSWKGLMLSGTRLAGSAGQRLMTWVFLKFTPISQLLYSHFSRRGALWLQAIGCLQVLFYLLSCSVVLTQYSDAFPYWVSFLVLCGVFVWVFLVLGWLLLYFYSRLHPTQSVLLVTTIRRNVMLSFWLLSSANFGNLCAALWLAPQVSYVSSLASYSVGHVISGMLSYVYACLQIWPFLLFMWCPKGVVTSVGESV.

A C4-type; atypical zinc finger spans residues 8-28 (CMCTPAARVFWNAGQVFCTRC). A Peptidase C31 domain is found at 69 to 180 (ECTPSGCCWL…QPFCPFEEAH (112 aa)). Residues 69–182 (ECTPSGCCWL…FCPFEEAHSD (114 aa)) are PCP1-alpha. Residues cysteine 76 and histidine 146 each act as for Nsp1-alpha papain-like cysteine proteinase activity in the active site. A PCP1-beta region spans residues 269-384 (PNVFDGKCWL…IFRFGAHKWY (116 aa)). The Peptidase C32 domain occupies 269 to 385 (PNVFDGKCWL…FRFGAHKWYG (117 aa)). Residues cysteine 276 and histidine 345 each act as for Nsp1-beta papain-like cysteine proteinase activity in the active site. The 108-residue stretch at 420-527 (TYSPPTDGSC…VGVCSEGCVA (108 aa)) folds into the Peptidase C33 domain. Residues cysteine 429 and histidine 498 each act as for Nsp2 cysteine proteinase activity in the active site. Disordered regions lie at residues 728 to 758 (AIGSAQSSSDSKRENMHNSREDEPLDLSHPA) and 1027 to 1064 (SVTPPPKSAGLVLDQTVPPPTDIQQEDATPSDGLSHAS). Residues 737-749 (DSKRENMHNSRED) are compositionally biased toward basic and acidic residues. Helical transmembrane passes span 1119–1139 (LWLQAIGCLQVLFYLLSCSVV), 1153–1173 (FLVLCGVFVWVFLVLGWLLLY), 1194–1214 (VMLSFWLLSSANFGNLCAALW), and 1233–1253 (VISGMLSYVYACLQIWPFLLF).

Its subcellular location is the host nucleus. It is found in the host cytoplasm. The protein localises to the host endoplasmic reticulum membrane. The protein resides in the membrane. In terms of biological role, is essential for viral subgenomic mRNA synthesis. Its function is as follows. Inhibits IFN-beta production. Counteracts the action of NF-kappaB by decreasing the phosphorylation of IkappaB-alpha, such that the degradation of IkappaB-alpha is suppressed. This leads to the blockage of NF-kappaB nuclear translocation and thus interference of NF-kappaB activation. Also seems to inhibit IRF3-dependent pathways. Functionally, nsp1-beta transactivates the programmed ribosomal frameshifting event leading to the expression of the 1aTF polyprotein. This chain is Truncated polyprotein 1aTF, found in Porcine reproductive and respiratory syndrome virus (isolate Pig/United States/SD 01-08/2001) (PRRSV).